The primary structure comprises 221 residues: Protein FixW (221 aa).

A Thioredoxin domain is found at 5–156 (LNLGSPAPPI…LPKVIDGNWR (152 aa)). A disulfide bond links C43 and C46.

It belongs to the thioredoxin family.

The chain is Protein FixW (fixW) from Rhizobium leguminosarum.